A 435-amino-acid polypeptide reads, in one-letter code: MAGQTVIVSGLNPAAILQSTIGGAPPSTAAAAAENGDTTRKVVPLSKDALQDFMVSIITQKLQGEKKPFYVLDLGEVVSLMDQWNVALPNVRPFYAVKCNPEPSFLSMLAAMGSNFVCASRAEIEYVLSLGISPERIVFANPCKPESDIIFAEKVGVNLTTYDSEDEVYKIKKHHPKCELLLRIKPMNDGNARCPMGPKYGALPEEIEPLLRIAQASRLTVSGVSFHIGSGDADSNAYLGAIAAAKQVFETAAKFGMSKMNVLDIGGGFTSGHQFTTAATAVKSALQQHFSNEPELTIIAEPGRFFAETAFTLATTIIGKRVRGDLREYWINDGLYGSMNCVLYDHATVTATPLACMSNRVNLNCSGSKMFPSTIFGPTCDALDTVLRDYHVPELQVNDWVIFPNMGAYTKAAGSNFNGFNTSAIVTHLAYAYPS.

N6-(pyridoxal phosphate)lysine is present on Lys98. Pyridoxal 5'-phosphate is bound by residues Ser230, Gly268, and 301-304 (EPGR). 344–345 (YD) contributes to the substrate binding site. Residue Cys380 is the Proton donor; shared with dimeric partner of the active site. Asp381 contacts substrate. Residue Tyr409 coordinates pyridoxal 5'-phosphate.

The protein belongs to the Orn/Lys/Arg decarboxylase class-II family. In terms of assembly, homodimer. Only the dimer is catalytically active, as the active sites are constructed of residues from both monomers. The cofactor is pyridoxal 5'-phosphate.

The catalysed reaction is L-ornithine + H(+) = putrescine + CO2. The protein operates within amine and polyamine biosynthesis; putrescine biosynthesis via L-ornithine pathway; putrescine from L-ornithine: step 1/1. With respect to regulation, inhibited by antizyme (AZ) in response to polyamine levels. AZ inhibits the assembly of the functional homodimer by binding to ODC monomers and targeting them for ubiquitin-independent proteolytic destruction by the 26S proteasome. In terms of biological role, catalyzes the first and rate-limiting step of polyamine biosynthesis that converts ornithine into putrescine, which is the precursor for the polyamines, spermidine and spermine. Polyamines are essential for cell proliferation and are implicated in cellular processes, ranging from DNA replication to apoptosis. This chain is Ornithine decarboxylase (ODC), found in Capsicum annuum (Capsicum pepper).